We begin with the raw amino-acid sequence, 450 residues long: Phosphoglucosamine mutase (450 aa).

S104 (phosphoserine intermediate) is an active-site residue. Residues S104, D245, D247, and D249 each coordinate Mg(2+). Position 104 is a phosphoserine (S104).

The protein belongs to the phosphohexose mutase family. It depends on Mg(2+) as a cofactor. In terms of processing, activated by phosphorylation.

It carries out the reaction alpha-D-glucosamine 1-phosphate = D-glucosamine 6-phosphate. Functionally, catalyzes the conversion of glucosamine-6-phosphate to glucosamine-1-phosphate. This Phenylobacterium zucineum (strain HLK1) protein is Phosphoglucosamine mutase.